The sequence spans 511 residues: MGTESLVHVLLVSFPGHGHVNPLLRLGRLLASKGFFLTLTTPESFGKQMRKAGNFTYEPTPVGDGFIRFEFFEDGWDEDDPRREDLDQYMAQLELIGKQVIPKIIKKSAEEYRPVSCLINNPFIPWVSDVAESLGLPSAMLWVQSCACFAAYYHYFHGLVPFPSEKEPEIDVQLPCMPLLKHDEMPSFLHPSTPYPFLRRAILGQYENLGKPFCILLDTFYELEKEIIDYMAKICPIKPVGPLFKNPKAPTLTVRDDCMKPDECIDWLDKKPPSSVVYISFGTVVYLKQEQVEEIGYALLNSGISFLWVMKPPPEDSGVKIVDLPDGFLEKVGDKGKVVQWSPQEKVLAHPSVACFVTHCGWNSTMESLASGVPVITFPQWGDQVTDAMYLCDVFKTGLRLCRGEAENRIISRDEVEKCLLEATAGPKAVALEENALKWKKEAEEAVADGGSSDRNIQAFVDEVRRTSVEIITSSKSKSIHRVKELVEKTATATANDKVELVESRRTRVQY.

His19 acts as the Proton acceptor in catalysis. An an anthocyanidin-binding site is contributed by His19. Residues Gln344, His359, Trp362, Asn363, Ser364, and Glu367 each contribute to the UDP-alpha-D-glucose site. Residue Gly382 coordinates an anthocyanidin. Asp383 and Gln384 together coordinate UDP-alpha-D-glucose.

It belongs to the UDP-glycosyltransferase family.

The enzyme catalyses limonin + UDP-alpha-D-glucose + H2O = limonin 17-beta-D-glucoside + UDP + 2 H(+). In terms of biological role, involved in the glucosylation of limonoids. The chain is Limonoid UDP-glucosyltransferase from Citrus unshiu (Satsuma mandarin).